We begin with the raw amino-acid sequence, 142 residues long: Nucleoside diphosphate kinase (142 aa).

The ATP site is built by lysine 10, phenylalanine 58, arginine 86, threonine 92, arginine 103, and asparagine 113. Catalysis depends on histidine 116, which acts as the Pros-phosphohistidine intermediate.

Belongs to the NDK family. Homotetramer. The cofactor is Mg(2+).

The protein resides in the cytoplasm. It carries out the reaction a 2'-deoxyribonucleoside 5'-diphosphate + ATP = a 2'-deoxyribonucleoside 5'-triphosphate + ADP. The enzyme catalyses a ribonucleoside 5'-diphosphate + ATP = a ribonucleoside 5'-triphosphate + ADP. Major role in the synthesis of nucleoside triphosphates other than ATP. The ATP gamma phosphate is transferred to the NDP beta phosphate via a ping-pong mechanism, using a phosphorylated active-site intermediate. This chain is Nucleoside diphosphate kinase, found in Ehrlichia chaffeensis (strain ATCC CRL-10679 / Arkansas).